Reading from the N-terminus, the 278-residue chain is Large ribosomal subunit protein uL2 (278 aa).

The disordered stretch occupies residues 226–278 (NPIDHPHGGGEGRTSGGRHPVTPWGKPTKGKKTRSNKSTDKFILISRHKRKKK).

This sequence belongs to the universal ribosomal protein uL2 family. As to quaternary structure, part of the 50S ribosomal subunit. Forms a bridge to the 30S subunit in the 70S ribosome.

Functionally, one of the primary rRNA binding proteins. Required for association of the 30S and 50S subunits to form the 70S ribosome, for tRNA binding and peptide bond formation. It has been suggested to have peptidyltransferase activity; this is somewhat controversial. Makes several contacts with the 16S rRNA in the 70S ribosome. The sequence is that of Large ribosomal subunit protein uL2 from Rhodopseudomonas palustris (strain HaA2).